Here is a 644-residue protein sequence, read N- to C-terminus: Acetyl-coenzyme A synthetase (644 aa).

Residues 189–192 (RGGK) and Thr307 contribute to the CoA site. Residues 383-385 (GEP), 407-412 (DTWWQT), Asp496, and Arg511 each bind ATP. Ser519 is a binding site for CoA. Arg522 is a binding site for ATP. Mg(2+) contacts are provided by Val533, His535, and Val538. Arg580 contributes to the CoA binding site. The residue at position 605 (Lys605) is an N6-acetyllysine.

It belongs to the ATP-dependent AMP-binding enzyme family. Mg(2+) is required as a cofactor. Acetylated. Deacetylation by the SIR2-homolog deacetylase activates the enzyme.

It carries out the reaction acetate + ATP + CoA = acetyl-CoA + AMP + diphosphate. In terms of biological role, catalyzes the conversion of acetate into acetyl-CoA (AcCoA), an essential intermediate at the junction of anabolic and catabolic pathways. AcsA undergoes a two-step reaction. In the first half reaction, AcsA combines acetate with ATP to form acetyl-adenylate (AcAMP) intermediate. In the second half reaction, it can then transfer the acetyl group from AcAMP to the sulfhydryl group of CoA, forming the product AcCoA. The sequence is that of Acetyl-coenzyme A synthetase from Rubrobacter xylanophilus (strain DSM 9941 / JCM 11954 / NBRC 16129 / PRD-1).